Reading from the N-terminus, the 274-residue chain is Centriolar and ciliogenesis-associated protein hyls-1 (274 aa).

2 disordered regions span residues 156–188 (RSSV…SSRP) and 255–274 (NNED…PYID). The segment covering 171–183 (VGLSTETEQSELQ) has biased composition (polar residues). The span at 257–274 (EDWKANHDKDWSPRPYID) shows a compositional bias: basic and acidic residues.

The protein belongs to the HYLS1 family. As to quaternary structure, interacts with sas-4; leading to its localization into newly forming centrioles.

The protein localises to the cytoplasm. It is found in the cytoskeleton. It localises to the microtubule organizing center. Its subcellular location is the centrosome. The protein resides in the centriole. The protein localises to the cell projection. It is found in the cilium. Its function is as follows. Plays an important role in ciliogenesis. The chain is Centriolar and ciliogenesis-associated protein hyls-1 from Caenorhabditis elegans.